The chain runs to 208 residues: Interleukin-6 (208 aa).

The signal sequence occupies residues 1-29; it reads MNSRFTSAFTPFAVSLGLLLVMTSAFPTP. Asn-38 carries N-linked (GlcNAc...) asparagine glycosylation. The cysteines at positions 72 and 78 are disulfide-linked. Residue Ser-81 is modified to Phosphoserine. The cysteines at positions 101 and 111 are disulfide-linked.

Belongs to the IL-6 superfamily. As to quaternary structure, component of a hexamer of two molecules each of IL6, IL6R and IL6ST; first binds to IL6R to associate with the signaling subunit IL6ST. Interacts with IL6R (via the N-terminal ectodomain); this interaction may be affected by IL6R-binding with SORL1, hence decreasing IL6 cis signaling. Interacts with SORL1 (via the N-terminal ectodomain); this interaction leads to IL6 internalization and lysosomal degradation. May form a trimeric complex with the soluble SORL1 ectodomain and soluble IL6R receptor; this interaction might stabilize circulating IL6, hence promoting IL6 trans signaling.

It is found in the secreted. Its function is as follows. Cytokine with a wide variety of biological functions in immunity, tissue regeneration, and metabolism. Binds to IL6R, then the complex associates to the signaling subunit IL6ST/gp130 to trigger the intracellular IL6-signaling pathway. The interaction with the membrane-bound IL6R and IL6ST stimulates 'classic signaling', whereas the binding of IL6 and soluble IL6R to IL6ST stimulates 'trans-signaling'. Alternatively, 'cluster signaling' occurs when membrane-bound IL6:IL6R complexes on transmitter cells activate IL6ST receptors on neighboring receiver cells. In terms of biological role, IL6 is a potent inducer of the acute phase response. Rapid production of IL6 contributes to host defense during infection and tissue injury, but excessive IL6 synthesis is involved in disease pathology. In the innate immune response, is synthesized by myeloid cells, such as macrophages and dendritic cells, upon recognition of pathogens through toll-like receptors (TLRs) at the site of infection or tissue injury. In the adaptive immune response, is required for the differentiation of B cells into immunoglobulin-secreting cells. Plays a major role in the differentiation of CD4(+) T cell subsets. Essential factor for the development of T follicular helper (Tfh) cells that are required for the induction of germinal-center formation. Required to drive naive CD4(+) T cells to the Th17 lineage. Also required for proliferation of myeloma cells and the survival of plasmablast cells. Acts as an essential factor in bone homeostasis and on vessels directly or indirectly by induction of VEGF, resulting in increased angiogenesis activity and vascular permeability. Induces, through 'trans-signaling' and synergistically with IL1B and TNF, the production of VEGF. Involved in metabolic controls, is discharged into the bloodstream after muscle contraction increasing lipolysis and improving insulin resistance. 'Trans-signaling' in central nervous system also regulates energy and glucose homeostasis. Mediates, through GLP-1, crosstalk between insulin-sensitive tissues, intestinal L cells and pancreatic islets to adapt to changes in insulin demand. Also acts as a myokine. Plays a protective role during liver injury, being required for maintenance of tissue regeneration. Also has a pivotal role in iron metabolism by regulating HAMP/hepcidin expression upon inflammation or bacterial infection. Through activation of IL6ST-YAP-NOTCH pathway, induces inflammation-induced epithelial regeneration. The sequence is that of Interleukin-6 (IL6) from Bos taurus (Bovine).